A 148-amino-acid polypeptide reads, in one-letter code: Large ribosomal subunit protein bL9 (148 aa).

The protein belongs to the bacterial ribosomal protein bL9 family.

Functionally, binds to the 23S rRNA. This is Large ribosomal subunit protein bL9 from Syntrophobacter fumaroxidans (strain DSM 10017 / MPOB).